The following is a 142-amino-acid chain: Large ribosomal subunit protein uL11 (142 aa).

The protein belongs to the universal ribosomal protein uL11 family. Part of the ribosomal stalk of the 50S ribosomal subunit. Interacts with L10 and the large rRNA to form the base of the stalk. L10 forms an elongated spine to which L12 dimers bind in a sequential fashion forming a multimeric L10(L12)X complex. One or more lysine residues are methylated.

In terms of biological role, forms part of the ribosomal stalk which helps the ribosome interact with GTP-bound translation factors. In Acidithiobacillus ferrooxidans (strain ATCC 23270 / DSM 14882 / CIP 104768 / NCIMB 8455) (Ferrobacillus ferrooxidans (strain ATCC 23270)), this protein is Large ribosomal subunit protein uL11.